The chain runs to 179 residues: CMT1A duplicated region transcript 4 protein homolog (179 aa).

Low complexity predominate over residues 1 to 15 (MISRPESSLSGLESS). A disordered region spans residues 1-20 (MISRPESSLSGLESSQEVQK).

In Mus musculus (Mouse), this protein is CMT1A duplicated region transcript 4 protein homolog (Cdrt4).